Consider the following 92-residue polypeptide: Acylphosphatase (92 aa).

The 88-residue stretch at 3 to 90 (RVHVLVAGRV…GEFTEFAVLR (88 aa)) folds into the Acylphosphatase-like domain. Catalysis depends on residues R18 and N36.

This sequence belongs to the acylphosphatase family.

The catalysed reaction is an acyl phosphate + H2O = a carboxylate + phosphate + H(+). This chain is Acylphosphatase (acyP), found in Methylococcus capsulatus (strain ATCC 33009 / NCIMB 11132 / Bath).